A 569-amino-acid chain; its full sequence is Urease subunit alpha (569 aa).

The region spanning 132–569 is the Urease domain; the sequence is GGVDTHIHFI…VPLGQRYFLF (438 aa). Positions 137, 139, and 220 each coordinate Ni(2+). N6-carboxylysine is present on K220. H222 provides a ligand contact to substrate. Ni(2+) contacts are provided by H249 and H275. H323 acts as the Proton donor in catalysis. Ni(2+) is bound at residue D363.

Belongs to the metallo-dependent hydrolases superfamily. Urease alpha subunit family. As to quaternary structure, heterotrimer of UreA (gamma), UreB (beta) and UreC (alpha) subunits. Three heterotrimers associate to form the active enzyme. It depends on Ni cation as a cofactor. Carboxylation allows a single lysine to coordinate two nickel ions.

The protein localises to the cytoplasm. The catalysed reaction is urea + 2 H2O + H(+) = hydrogencarbonate + 2 NH4(+). Its pathway is nitrogen metabolism; urea degradation; CO(2) and NH(3) from urea (urease route): step 1/1. This is Urease subunit alpha from Bacillus subtilis (strain 168).